The chain runs to 377 residues: Succinyl-diaminopimelate desuccinylase (377 aa).

His66 serves as a coordination point for Zn(2+). Residue Asp68 is part of the active site. Asp99 serves as a coordination point for Zn(2+). The active-site Proton acceptor is Glu133. Residues Glu134, Glu162, and His348 each contribute to the Zn(2+) site.

This sequence belongs to the peptidase M20A family. DapE subfamily. In terms of assembly, homodimer. Zn(2+) is required as a cofactor. Co(2+) serves as cofactor.

It catalyses the reaction N-succinyl-(2S,6S)-2,6-diaminopimelate + H2O = (2S,6S)-2,6-diaminopimelate + succinate. The protein operates within amino-acid biosynthesis; L-lysine biosynthesis via DAP pathway; LL-2,6-diaminopimelate from (S)-tetrahydrodipicolinate (succinylase route): step 3/3. Its function is as follows. Catalyzes the hydrolysis of N-succinyl-L,L-diaminopimelic acid (SDAP), forming succinate and LL-2,6-diaminopimelate (DAP), an intermediate involved in the bacterial biosynthesis of lysine and meso-diaminopimelic acid, an essential component of bacterial cell walls. The sequence is that of Succinyl-diaminopimelate desuccinylase from Histophilus somni (strain 2336) (Haemophilus somnus).